A 303-amino-acid chain; its full sequence is D-alanine--D-alanine ligase (303 aa).

An ATP-grasp domain is found at 103–293 (KTLFIKGGIP…FAQLCEKILE (191 aa)). Position 130–179 (130–179 (PYVIKPSRQGSSIGIEFVYDIKELDQAIKKSTQYDHVVLAEALITGKELT)) interacts with ATP. Residues D247, E260, and N262 each coordinate Mg(2+).

It belongs to the D-alanine--D-alanine ligase family. It depends on Mg(2+) as a cofactor. Mn(2+) is required as a cofactor.

It is found in the cytoplasm. It carries out the reaction 2 D-alanine + ATP = D-alanyl-D-alanine + ADP + phosphate + H(+). Its pathway is cell wall biogenesis; peptidoglycan biosynthesis. In terms of biological role, cell wall formation. This Methylacidiphilum infernorum (isolate V4) (Methylokorus infernorum (strain V4)) protein is D-alanine--D-alanine ligase.